We begin with the raw amino-acid sequence, 68 residues long: MKTHFAIFLITLFLFQMFSQSDAIFKAIWSGIKRLCGKRGLSDLYDLDEMFDGEISQADIDFLKELMR.

Residues 1 to 23 form the signal peptide; sequence MKTHFAIFLITLFLFQMFSQSDA. Residue cysteine 36 is modified to Cysteine amide. Positions 40 to 68 are excised as a propeptide; the sequence is GLSDLYDLDEMFDGEISQADIDFLKELMR.

This sequence belongs to the non-disulfide-bridged peptide (NDBP) superfamily. Short antimicrobial peptide (group 4) family. As to expression, expressed by the venom gland.

The protein resides in the secreted. The protein localises to the target cell membrane. In terms of biological role, amphipathic peptide with antimicrobial activity. This Heterometrus petersii (Asian forest scorpion) protein is Peptide Hp1412.